The following is a 478-amino-acid chain: Lipoprotein lipase (478 aa).

An N-terminal signal peptide occupies residues 1–27 (MESKALLLVALSVWLQSLIVSREGLAT). The segment at 35-56 (RDFTDIESKFALRTPEDTVEDT) is interaction with GPIHBP1. C57 and C70 form a disulfide bridge. An N-linked (GlcNAc...) asparagine glycan is attached at N73. A 3'-nitrotyrosine modification is found at Y124. S162 (nucleophile) is an active-site residue. D186 serves as the catalytic Charge relay system. At Y194 the chain carries 3'-nitrotyrosine. Ca(2+) is bound by residues A197, R200, S202, and D205. C246 and C269 are joined by a disulfide. The tract at residues 246–269 (CNIGEAIRVIAERGLGDVDQLVKC) is essential for determining substrate specificity. The Charge relay system role is filled by H271. 2 cysteine pairs are disulfide-bonded: C294–C313 and C305–C308. The PLAT domain maps to 344–467 (FHYQVKMRFS…KGKSSVVFVK (124 aa)). Y346 carries the 3'-nitrotyrosine modification. A glycan (N-linked (GlcNAc...) asparagine) is linked at N389. Residues 420–424 (WSNWW) form an important for interaction with lipoprotein particles region. The interval 433–437 (KIRVK) is important for heparin binding. The interaction with GPIHBP1 stretch occupies residues 446–470 (IFCSREKKSHLQKGKSSVVFVKCHD). A disulfide bond links C448 and C468.

The protein belongs to the AB hydrolase superfamily. Lipase family. In terms of assembly, homodimer. Interacts with GPIHBP1 with 1:1 stoichiometry. Interacts with APOC2; the interaction activates LPL activity in the presence of lipids. Interaction with heparan sulfate proteoglycans is required to protect LPL against loss of activity. Associates with lipoprotein particles in blood plasma. Interacts with LMF1 and SEL1L; interaction with SEL1L is required to prevent aggregation of newly synthesized LPL in the endoplasmic reticulum (ER), and for normal export of LPL from the ER to the extracellular space. Interacts with SORL1; SORL1 acts as a sorting receptor, promoting LPL localization to endosomes and later to lysosomes, leading to degradation of newly synthesized LPL. In terms of processing, tyrosine nitration after lipopolysaccharide (LPS) challenge down-regulates the lipase activity.

It localises to the cell membrane. Its subcellular location is the secreted. It is found in the extracellular space. The protein localises to the extracellular matrix. The enzyme catalyses a triacylglycerol + H2O = a diacylglycerol + a fatty acid + H(+). It carries out the reaction a 1,2-diacyl-sn-glycero-3-phosphocholine + H2O = a 2-acyl-sn-glycero-3-phosphocholine + a fatty acid + H(+). The catalysed reaction is 1,2,3-tri-(9Z-octadecenoyl)-glycerol + H2O = di-(9Z)-octadecenoylglycerol + (9Z)-octadecenoate + H(+). It catalyses the reaction 1,2-di-(9Z-octadecenoyl)-sn-glycero-3-phosphocholine + H2O = (9Z-octadecenoyl)-sn-glycero-3-phosphocholine + (9Z)-octadecenoate + H(+). The enzyme catalyses 1,2,3-tributanoylglycerol + H2O = dibutanoylglycerol + butanoate + H(+). It carries out the reaction 1,2-dihexadecanoyl-sn-glycero-3-phosphocholine + H2O = hexadecanoyl-sn-glycero-3-phosphocholine + hexadecanoate + H(+). With respect to regulation, the apolipoprotein APOC2 acts as a coactivator of LPL activity. Ca(2+) binding promotes protein stability and formation of the active homodimer. Interaction with GPIHBP1 protects LPL against inactivation by ANGPTL4. In terms of biological role, key enzyme in triglyceride metabolism. Catalyzes the hydrolysis of triglycerides from circulating chylomicrons and very low density lipoproteins (VLDL), and thereby plays an important role in lipid clearance from the blood stream, lipid utilization and storage. Although it has both phospholipase and triglyceride lipase activities it is primarily a triglyceride lipase with low but detectable phospholipase activity. Mediates margination of triglyceride-rich lipoprotein particles in capillaries. Recruited to its site of action on the luminal surface of vascular endothelium by binding to GPIHBP1 and cell surface heparan sulfate proteoglycans. This chain is Lipoprotein lipase (LPL), found in Sus scrofa (Pig).